The primary structure comprises 63 residues: Beta-insect depressant toxin Im-3 (63 aa).

Positions 1 to 63 constitute an LCN-type CS-alpha/beta domain; that stretch reads KEGYGVGKDG…KVWESSTNTC (63 aa). 4 disulfide bridges follow: cysteine 11–cysteine 63, cysteine 15–cysteine 37, cysteine 22–cysteine 44, and cysteine 26–cysteine 46.

It belongs to the long (4 C-C) scorpion toxin superfamily. Sodium channel inhibitor family. Beta subfamily. As to expression, expressed by the venom gland.

The protein localises to the secreted. Functionally, beta toxins bind voltage-independently at site-4 of sodium channels (Nav) and shift the voltage of activation toward more negative potentials thereby affecting sodium channel activation and promoting spontaneous and repetitive firing. Induces paralysis in cricket A.domestica but does not induce death. The sequence is that of Beta-insect depressant toxin Im-3 from Isometrus maculatus (Lesser brown scorpion).